A 143-amino-acid chain; its full sequence is Polyadenylate-binding protein-interacting protein 2 (143 aa).

The PAM2-like motif lies at Thr-11–Pro-21.

This Arabidopsis thaliana (Mouse-ear cress) protein is Polyadenylate-binding protein-interacting protein 2 (CID2).